A 130-amino-acid polypeptide reads, in one-letter code: Small ribosomal subunit protein uS11 (130 aa).

Belongs to the universal ribosomal protein uS11 family. In terms of assembly, part of the 30S ribosomal subunit. Interacts with proteins S7 and S18. Binds to IF-3.

In terms of biological role, located on the platform of the 30S subunit, it bridges several disparate RNA helices of the 16S rRNA. Forms part of the Shine-Dalgarno cleft in the 70S ribosome. In Prochlorococcus marinus (strain MIT 9312), this protein is Small ribosomal subunit protein uS11.